Here is a 951-residue protein sequence, read N- to C-terminus: Multiple C2 and transmembrane domain-containing protein 1 (951 aa).

Disordered stretches follow at residues 29-79 (LGVG…RWSG), 92-117 (SSSQ…AEQG), 129-198 (LPVA…QKSS), and 210-231 (LEPA…ALQK). A compositionally biased stretch (gly residues) spans 31–43 (VGKGKGGGGGRAG). Over residues 147–168 (PGGRSPDSAPSSSSASSSLSSS) the composition is skewed to low complexity. The segment covering 174 to 184 (RGDRVRDESTR) has biased composition (basic and acidic residues). A compositionally biased stretch (low complexity) spans 219–228 (PARGPAEPQA). C2 domains follow at residues 240–358 (KIST…DVTL), 404–521 (QTQS…KLEL), and 555–676 (QKER…AYVL). Ca(2+) is bound by residues Asp275, Asp281, Asp328, Asp330, Asp336, Asp438, Asp444, Asp491, Asp493, Asp499, Asp594, Asp600, Asp646, Asp648, and Asp654. 2 consecutive transmembrane segments (helical) span residues 763 to 783 (FVLF…LLLL) and 866 to 886 (PFLS…LYFI).

This sequence belongs to the MCTP family. Ca(2+) is required as a cofactor.

The protein localises to the cytoplasmic vesicle. The protein resides in the secretory vesicle. It localises to the synaptic vesicle membrane. Its subcellular location is the recycling endosome. It is found in the endoplasmic reticulum membrane. In terms of biological role, calcium sensor which is essential for the stabilization of normal baseline neurotransmitter release and for the induction and long-term maintenance of presynaptic homeostatic plasticity. In Mus musculus (Mouse), this protein is Multiple C2 and transmembrane domain-containing protein 1.